We begin with the raw amino-acid sequence, 496 residues long: Probable cytosol aminopeptidase (496 aa).

Residues lysine 266 and aspartate 271 each contribute to the Mn(2+) site. Lysine 278 is a catalytic residue. Residues aspartate 289, aspartate 348, and glutamate 350 each coordinate Mn(2+). Residue arginine 352 is part of the active site.

This sequence belongs to the peptidase M17 family. Requires Mn(2+) as cofactor.

The protein resides in the cytoplasm. It catalyses the reaction Release of an N-terminal amino acid, Xaa-|-Yaa-, in which Xaa is preferably Leu, but may be other amino acids including Pro although not Arg or Lys, and Yaa may be Pro. Amino acid amides and methyl esters are also readily hydrolyzed, but rates on arylamides are exceedingly low.. The enzyme catalyses Release of an N-terminal amino acid, preferentially leucine, but not glutamic or aspartic acids.. Functionally, presumably involved in the processing and regular turnover of intracellular proteins. Catalyzes the removal of unsubstituted N-terminal amino acids from various peptides. The protein is Probable cytosol aminopeptidase of Pseudomonas fluorescens (strain Pf0-1).